The following is a 148-amino-acid chain: UPF0179 protein Mboo_1959 (148 aa).

Belongs to the UPF0179 family.

The sequence is that of UPF0179 protein Mboo_1959 from Methanoregula boonei (strain DSM 21154 / JCM 14090 / 6A8).